The chain runs to 1445 residues: MGNLVIPLGKGRAGRVESGQRIPPPAPRPSVECTGDDIALQMEKMLFPLKSPSATWLSPSSTPWMMDFILTSVCGLVLLFLLLLYVHSDPPSPPPGRKRSSREPQRERSGRSRSRKISALKACRILLRELEETRDLNYLLESHLRKLAGEGSSHLPLGGDPLGDVCKPVPAKAHQPHGKCMQDPSPASLSPPAPPAPLASTLSPGPMTFSEPFGPHSTLSASGPPEPLLPLKCPATQPHVVFPPSPQPHGPLASSPPPPDSSLAGLQCGSTTCPVPQSSPLHNQVLPPPTRVISGLGCSSDPIWDLYCWREAATTWGLSTYSHGKSQPRHLPDHTSEASFWGDPTPKHMEVGGCTFIHPDVQKLLETLIAKRALMKMWQEKERKRADHPHMTSLGKEWDITTLNPFWNVSTQPQQLPRPQQVSDATTVGNHLQQKRSQLFWDLPSLNSESLATTVWVSRNPSSQNAHSVPLDKASTSLPGEPEVEASSQLSQAPPQPHHMAQPQHFTPAWPQSQPPPLAEIQTQAHLSPPVPSLGCSSPPQIRGCGASYPTSQERTQSVIPTGKEYLEWPLKKRPKWKRVLPSLLKKSQAVLSQPTAHLPQERPASWSPKSAPILPGVVTSPELPEHWWQGRNAIHQEQSCGPPSRLQASGDLLQPDGEFPGRPQSQAEDTQQALLPSQPSDFAGKGRKDVQKTGFRSSGRFSDKGCLGSKLGPDPSRDQGSGRTSVKALDEDKEAEGDLRRSWKYQSVSSTPRDPDKEHLENKLQIHLARKVGEIKEGWIPMPVRRSWLMAKCAVPKSDTHRKPGKLASWRGGKAHVNTSQELSFLHPCTQQILEVHLVRFCVRHSWGTDLQSLEPINVWSGEAQAPPFPQSTFTPWASWVSRVESVPKVPIFLGKRPQNGPGDNRTTSKSVPTVSGPLAAPPPEQEGVQRPPRGSQSADTHGRSEAFPTGHKGRGCSQPPTCSLVGRTWQSRTVLESGKPKPRLEGSMGSEMAGNEAWLESESMSPGDPCSSRALQVLSIGSQWARAEDALQALKVGEKPPTWEVTLGASVRASSGSVQEDLRSTGALGTTGNPSASSVCVAQDPEQLHLKAQVVSEIALIVQVDSEEQLPGRAPGILLQDGATGLCLPGRHMDMLTAADRLPTQAPLSTSQSVSGKNMTASQGPCALLWKGGDSPGQQEPGSPKAKAPQKSQKTLGCADKGEAHRRPRTGEQGHRSKGPRTSEASGRSHPAQAREIGDKQERKYNQLQLEKGQTPPESHFQRKISHHPQGLHPRKGGTRWEDVLQKGKPGADAFQSWGSGPPRQFMDCMADKAWTISRVVGQILVDKLGLQWGRGPSEVNRHKGDFRAQENVPSCCHRGHCHQERSREMRALACSPKATPKGHHCPVKNRGIRDRDSSWAPPPREPVSPAGPHHHRPRMASTSGGPHPQLQELMSAQRCLAS.

A helical transmembrane segment spans residues 64–84 (WMMDFILTSVCGLVLLFLLLL). Disordered stretches follow at residues 90 to 115 (PPSP…SRSR) and 169 to 262 (VPAK…PDSS). A compositionally biased stretch (basic and acidic residues) spans 101–110 (SREPQRERSG). The segment covering 241 to 260 (VFPPSPQPHGPLASSPPPPD) has biased composition (pro residues). N408 carries N-linked (GlcNAc...) asparagine glycosylation. 4 disordered regions span residues 411-430 (TQPQ…TVGN), 460-557 (NPSS…ERTQ), 592-619 (LSQP…PGVV), and 637-761 (QEQS…KEHL). A compositionally biased stretch (polar residues) spans 664 to 681 (PQSQAEDTQQALLPSQPS). 3 N-linked (GlcNAc...) asparagine glycosylation sites follow: N819, N906, and N1160. Disordered stretches follow at residues 894–966 (FLGK…TCSL), 1143–1242 (RLPT…IGDK), 1254–1280 (KGQT…RKGG), and 1378–1445 (SPKA…CLAS). 2 stretches are compositionally biased toward polar residues: residues 906-915 (NRTTSKSVPT) and 1148-1165 (APLS…TASQ). Basic and acidic residues predominate over residues 1202-1217 (DKGEAHRRPRTGEQGH).

Belongs to the SPATA31 family.

The protein resides in the membrane. In terms of biological role, may play a role in spermatogenesis. This chain is Spermatogenesis-associated protein 31E1 (SPATA31E1), found in Homo sapiens (Human).